A 194-amino-acid polypeptide reads, in one-letter code: ATP-dependent Clp protease proteolytic subunit (194 aa).

Residue Ser98 is the Nucleophile of the active site. Residue His123 is part of the active site.

The protein belongs to the peptidase S14 family. Fourteen ClpP subunits assemble into 2 heptameric rings which stack back to back to give a disk-like structure with a central cavity, resembling the structure of eukaryotic proteasomes.

The protein resides in the cytoplasm. It catalyses the reaction Hydrolysis of proteins to small peptides in the presence of ATP and magnesium. alpha-casein is the usual test substrate. In the absence of ATP, only oligopeptides shorter than five residues are hydrolyzed (such as succinyl-Leu-Tyr-|-NHMec, and Leu-Tyr-Leu-|-Tyr-Trp, in which cleavage of the -Tyr-|-Leu- and -Tyr-|-Trp bonds also occurs).. In terms of biological role, cleaves peptides in various proteins in a process that requires ATP hydrolysis. Has a chymotrypsin-like activity. Plays a major role in the degradation of misfolded proteins. In Clostridium botulinum (strain Loch Maree / Type A3), this protein is ATP-dependent Clp protease proteolytic subunit.